The following is a 155-amino-acid chain: MHLIYIVMAATATTLHASSSAILDPSDVKIMTKNVESRIGNDAAFAAGRFLRGAYEDVHREEERMFGLKQNQHSFIKPSQAQDAAAIDALNIAKEALESTRNTKDHPHATATAGDQSLNPLIAAYPLRASPNAGVPQQHLGVALGSVHPHTSRST.

The first 17 residues, 1 to 17 (MHLIYIVMAATATTLHA), serve as a signal peptide directing secretion. The RxLR-dEER signature appears at 49–64 (RFLRGAYEDVHREEER).

It belongs to the RxLR effector family.

The protein resides in the secreted. It is found in the host nucleus. The protein localises to the host cytoplasm. Functionally, secreted effector that completely suppresses the host cell death induced by cell death-inducing proteins. The polypeptide is Secreted RxLR effector protein 38 (Plasmopara viticola (Downy mildew of grapevine)).